The chain runs to 182 residues: UPF0316 protein Sde_0566 (182 aa).

3 consecutive transmembrane segments (helical) span residues 7-27 (VAPE…VSLG), 41-61 (LAAF…GQVF), and 67-87 (WYLA…GMWI).

It belongs to the UPF0316 family.

The protein resides in the cell membrane. This chain is UPF0316 protein Sde_0566, found in Saccharophagus degradans (strain 2-40 / ATCC 43961 / DSM 17024).